A 294-amino-acid polypeptide reads, in one-letter code: Sarcotoxin-2A (294 aa).

The first 22 residues, 1–22, serve as a signal peptide directing secretion; it reads MKSFVFFAACMAIIALSSLVQA. Residues 23–24 constitute a propeptide, removed by a dipeptidylpeptidase; sequence YP. Gln25 bears the Pyrrolidone carboxylic acid mark. Arg293 is subject to Arginine amide.

This sequence belongs to the attacin/sarcotoxin-2 family. In terms of tissue distribution, synthesized by the fat body and is eventually secreted into the hemolymph.

Its subcellular location is the secreted. Its function is as follows. Sarcotoxin II is an antibacterial protein which plays a role in the inflammatory response of this insect. The main effect of sarcotoxin II on E.coli may be the inhibition of cell wall synthesis, including septum formation. This is Sarcotoxin-2A from Sarcophaga peregrina (Flesh fly).